The primary structure comprises 193 residues: Large ribosomal subunit protein uL5 (193 aa).

It belongs to the universal ribosomal protein uL5 family. In terms of assembly, part of the 50S ribosomal subunit; part of the 5S rRNA/L5/L18/L25 subcomplex. Contacts the 5S rRNA and the P site tRNA. Forms a bridge to the 30S subunit in the 70S ribosome.

In terms of biological role, this is one of the proteins that bind and probably mediate the attachment of the 5S RNA into the large ribosomal subunit, where it forms part of the central protuberance. In the 70S ribosome it contacts protein S13 of the 30S subunit (bridge B1b), connecting the 2 subunits; this bridge is implicated in subunit movement. Contacts the P site tRNA; the 5S rRNA and some of its associated proteins might help stabilize positioning of ribosome-bound tRNAs. This is Large ribosomal subunit protein uL5 from Arthrobacter sp. (strain FB24).